Reading from the N-terminus, the 3218-residue chain is Serine/threonine-protein kinase Smg1 (3218 aa).

Residues 32–78 form a disordered region; it reads LNNNGNHGDSSNEGGGGNGSGRGGATGSGNIAGLGGSESMWSPGGGK. A compositionally biased stretch (low complexity) spans 33–43; sequence NNNGNHGDSSN. A compositionally biased stretch (gly residues) spans 44 to 67; that stretch reads EGGGGNGSGRGGATGSGNIAGLGG. S70 carries the phosphoserine modification. In terms of domain architecture, FAT spans 1289–1692; it reads DAAAAAREEG…IFPAVVGANR (404 aa). An HEAT repeat occupies 1643–1678; that stretch reads APWKVIIPQLFSRLNHHEPYVRKSVCDLLCRLAKSR. A PI3K/PI4K catalytic domain is found at 1897 to 2232; sequence VESSVCVLPT…LGVGDLKYHK (336 aa). The interval 1903–1909 is G-loop; it reads VLPTKTK. The catalytic loop stretch occupies residues 2101 to 2109; sequence GLGDRHLDN. Residues 2121–2145 are activation loop; the sequence is HIDYNVCFEKGRTLRIPEKVPFRLT. In terms of domain architecture, FATC spans 3186–3218; it reads QRSTVAEQVDYVIREACNPENLAVLYEGWTPWV.

The protein belongs to the PI3/PI4-kinase family. In terms of assembly, component of a post-splicing multiprotein NMD complex. Mn(2+) serves as cofactor.

The protein localises to the cytoplasm. The catalysed reaction is L-seryl-[protein] + ATP = O-phospho-L-seryl-[protein] + ADP + H(+). The enzyme catalyses L-threonyl-[protein] + ATP = O-phospho-L-threonyl-[protein] + ADP + H(+). Its function is as follows. Serine/threonine protein kinase involved in mRNA surveillance. Recognizes the substrate consensus sequence [ST]-Q. Involved in nonsense-mediated decay (NMD) of mRNAs containing premature stop codons, probably by phosphorylating Upf1. In Drosophila melanogaster (Fruit fly), this protein is Serine/threonine-protein kinase Smg1 (nonC).